The following is a 201-amino-acid chain: uncharacterized protein (201 aa).

The chain crosses the membrane as a helical span at residues 11–31; that stretch reads IWKSLYLLIIVGMLYIGYILI.

The protein resides in the membrane. This is an uncharacterized protein from Rickettsia prowazekii (strain Madrid E).